A 581-amino-acid polypeptide reads, in one-letter code: Arginine--tRNA ligase (581 aa).

The 'HIGH' region signature appears at P126–H136.

Belongs to the class-I aminoacyl-tRNA synthetase family. In terms of assembly, monomer.

The protein localises to the cytoplasm. The enzyme catalyses tRNA(Arg) + L-arginine + ATP = L-arginyl-tRNA(Arg) + AMP + diphosphate. This Shewanella piezotolerans (strain WP3 / JCM 13877) protein is Arginine--tRNA ligase.